We begin with the raw amino-acid sequence, 386 residues long: Succinate--CoA ligase [ADP-forming] subunit beta (386 aa).

Residues 9–244 enclose the ATP-grasp domain; the sequence is KEILRSYGVS…LDEEDPKEVE (236 aa). ATP-binding positions include K46, 53 to 55, E99, C102, and E107; that span reads GRG. Mg(2+) contacts are provided by N199 and D213. Substrate contacts are provided by residues N264 and 321 to 323; that span reads GIM.

The protein belongs to the succinate/malate CoA ligase beta subunit family. As to quaternary structure, heterotetramer of two alpha and two beta subunits. It depends on Mg(2+) as a cofactor.

The enzyme catalyses succinate + ATP + CoA = succinyl-CoA + ADP + phosphate. It catalyses the reaction GTP + succinate + CoA = succinyl-CoA + GDP + phosphate. It participates in carbohydrate metabolism; tricarboxylic acid cycle; succinate from succinyl-CoA (ligase route): step 1/1. In terms of biological role, succinyl-CoA synthetase functions in the citric acid cycle (TCA), coupling the hydrolysis of succinyl-CoA to the synthesis of either ATP or GTP and thus represents the only step of substrate-level phosphorylation in the TCA. The beta subunit provides nucleotide specificity of the enzyme and binds the substrate succinate, while the binding sites for coenzyme A and phosphate are found in the alpha subunit. The chain is Succinate--CoA ligase [ADP-forming] subunit beta from Geobacillus kaustophilus (strain HTA426).